Here is a 32-residue protein sequence, read N- to C-terminus: Tail virion protein G7P (32 aa).

A helical membrane pass occupies residues 8–28; that stretch reads IIYVVFALGLVVSFGLGAITA.

Belongs to the inovirus G7P protein family.

It localises to the virion. Its subcellular location is the host membrane. Functionally, may initiate with G9P the virion concomitant assembly-budding process, by interacting with the packaging signal of the viral genome. The assembly-budding takes place at the host inner membrane. In turn, G7P and G9P are present at the end of the filamentous virion that emerges first from the bacterial host. The sequence is that of Tail virion protein G7P (VII) from Escherichia coli (Bacteriophage IKe).